Here is a 31-residue protein sequence, read N- to C-terminus: Cytochrome b6-f complex subunit 6 (31 aa).

A helical membrane pass occupies residues 4–24 (ITSYFGFLLAALTITSALFIG).

Belongs to the PetL family. The 4 large subunits of the cytochrome b6-f complex are cytochrome b6, subunit IV (17 kDa polypeptide, PetD), cytochrome f and the Rieske protein, while the 4 small subunits are PetG, PetL, PetM and PetN. The complex functions as a dimer.

The protein resides in the plastid. It localises to the chloroplast thylakoid membrane. Component of the cytochrome b6-f complex, which mediates electron transfer between photosystem II (PSII) and photosystem I (PSI), cyclic electron flow around PSI, and state transitions. PetL is important for photoautotrophic growth as well as for electron transfer efficiency and stability of the cytochrome b6-f complex. The polypeptide is Cytochrome b6-f complex subunit 6 (Hamamelis virginiana (Witch-hazel)).